A 430-amino-acid polypeptide reads, in one-letter code: 3-phosphoshikimate 1-carboxyvinyltransferase (430 aa).

Lys20, Ser21, and Arg25 together coordinate 3-phosphoshikimate. Lys20 lines the phosphoenolpyruvate pocket. 2 residues coordinate phosphoenolpyruvate: Gly92 and Arg120. 4 residues coordinate 3-phosphoshikimate: Ser166, Gln168, Asp312, and Lys339. Phosphoenolpyruvate is bound at residue Gln168. Asp312 acts as the Proton acceptor in catalysis. Residues Arg343 and Arg387 each coordinate phosphoenolpyruvate.

The protein belongs to the EPSP synthase family. As to quaternary structure, monomer.

Its subcellular location is the cytoplasm. The catalysed reaction is 3-phosphoshikimate + phosphoenolpyruvate = 5-O-(1-carboxyvinyl)-3-phosphoshikimate + phosphate. It participates in metabolic intermediate biosynthesis; chorismate biosynthesis; chorismate from D-erythrose 4-phosphate and phosphoenolpyruvate: step 6/7. In terms of biological role, catalyzes the transfer of the enolpyruvyl moiety of phosphoenolpyruvate (PEP) to the 5-hydroxyl of shikimate-3-phosphate (S3P) to produce enolpyruvyl shikimate-3-phosphate and inorganic phosphate. The sequence is that of 3-phosphoshikimate 1-carboxyvinyltransferase from Lactococcus lactis subsp. lactis (strain IL1403) (Streptococcus lactis).